A 251-amino-acid polypeptide reads, in one-letter code: MPSPRPRGSPPPAPSGSRVRPPRSGRSPAPRSPTGPNTPRAPGRFESPFSVEAILARPDPCAPAASQPSGSACVHPAFWTAASLCATGGLPWACPTSWLPAYLSVGFYPVPGPRVAPVCGLLGFGVTGLELAHCSGLWAFPDWAPTEDLQDTERQQKRVRTMFNLEQLEELEKVFAKQHNLVGKKRAQLAARLKLTENQVRVWFQNRRVKYQKQQKLRAAVTSAEAASLDEPSSSSIASIQSDDAESGVDG.

A compositionally biased stretch (pro residues) spans 1-14; that stretch reads MPSPRPRGSPPPAP. The segment at 1-47 is disordered; sequence MPSPRPRGSPPPAPSGSRVRPPRSGRSPAPRSPTGPNTPRAPGRFES. Residues 15–35 show a composition bias toward low complexity; sequence SGSRVRPPRSGRSPAPRSPTG. A DNA-binding region (homeobox) is located at residues 156–215; that stretch reads QKRVRTMFNLEQLEELEKVFAKQHNLVGKKRAQLAARLKLTENQVRVWFQNRRVKYQKQQ. The span at 224–242 shows a compositional bias: low complexity; it reads AEAASLDEPSSSSIASIQS. Residues 224–251 form a disordered region; sequence AEAASLDEPSSSSIASIQSDDAESGVDG.

It localises to the nucleus. Transcription regulator acting downstream of both FOXA2 and Brachyury (T) during notochord development. Required for node morphogenesis. Is essential for cilia formation in the posterior notochord (PNC) and for left-right patterning; acts upstream of FOXJ1 and RFX3 in this process and is required for the expression of various components important for axonemal assembly and function. Plays a role in regulating axial versus paraxial cell fate. Activates the transcription of ciliary proteins C11orf97 homolog, FAM183B and SPACA9 in the embryonic ventral node. The protein is Homeobox protein notochord (NOTO) of Homo sapiens (Human).